We begin with the raw amino-acid sequence, 615 residues long: Sodium-dependent neutral amino acid transporter B(0)AT3 (615 aa).

At M1–Y26 the chain is on the cytoplasmic side. The helical transmembrane segment at L27 to C47 threads the bilayer. Residues Q48–G52 are Extracellular-facing. The chain crosses the membrane as a helical span at residues G53–I73. At E74–S105 the chain is on the cytoplasmic side. A helical transmembrane segment spans residues V106–L126. The Extracellular segment spans residues N127–T177. N-linked (GlcNAc...) asparagine glycosylation is found at N143 and N167. A helical membrane pass occupies residues I178–I198. Topologically, residues R199–K206 are cytoplasmic. Residues V207 to L227 form a helical membrane-spanning segment. Topologically, residues T228–D255 are extracellular. Residues A256–S276 traverse the membrane as a helical segment. Over Y277–A288 the chain is Cytoplasmic. The chain crosses the membrane as a helical span at residues V289–V309. Residues M310–G397 are Extracellular-facing. N353 carries N-linked (GlcNAc...) asparagine glycosylation. Residues A398–F418 form a helical membrane-spanning segment. Residues G419–E441 are Cytoplasmic-facing. A helical transmembrane segment spans residues V442–S462. The Extracellular segment spans residues G463–S472. Residues F473–I493 form a helical membrane-spanning segment. At Y494–R520 the chain is on the cytoplasmic side. Residues V521–T541 form a helical membrane-spanning segment. Residues P542 to T570 lie on the Extracellular side of the membrane. The helical transmembrane segment at C571–L591 threads the bilayer. Residues S592–C615 lie on the Cytoplasmic side of the membrane.

The protein belongs to the sodium:neurotransmitter symporter (SNF) (TC 2.A.22) family. SLC6A18 subfamily. As to quaternary structure, interacts with CLTRN; this interaction regulates the trafficking of SLC6A18 to the cell membrane and its activity. Expressed predominantly in kidney.

It localises to the apical cell membrane. It is found in the cell membrane. The catalysed reaction is L-alanine(out) + chloride(out) + 2 Na(+)(out) = L-alanine(in) + chloride(in) + 2 Na(+)(in). It catalyses the reaction glycine(out) + chloride(out) + 2 Na(+)(out) = glycine(in) + chloride(in) + 2 Na(+)(in). It carries out the reaction L-methionine(out) + chloride(out) + 2 Na(+)(out) = L-methionine(in) + chloride(in) + 2 Na(+)(in). The enzyme catalyses L-valine(out) + chloride(out) + 2 Na(+)(out) = L-valine(in) + chloride(in) + 2 Na(+)(in). The catalysed reaction is L-isoleucine(out) + chloride(out) + 2 Na(+)(out) = L-isoleucine(in) + chloride(in) + 2 Na(+)(in). It catalyses the reaction L-serine(out) + chloride(out) + 2 Na(+)(out) = L-serine(in) + chloride(in) + 2 Na(+)(in). It carries out the reaction L-leucine(out) + chloride(out) + 2 Na(+)(out) = L-leucine(in) + chloride(in) + 2 Na(+)(in). Symporter that transports one amino acid molecule together with two sodium and one chloride ions in kidneys and plays a role in the neutral amino acids reabsorption. Preferentially transports neutral amino acids such as L-glycine and L-alanine but also other neutral amino acids. Required CLTRN for cell surface expression and for its amino acid transporter activity. The transport mechanism is pH-independent. This chain is Sodium-dependent neutral amino acid transporter B(0)AT3, found in Mus musculus (Mouse).